The following is a 172-amino-acid chain: 3-hydroxydecanoyl-[acyl-carrier-protein] dehydratase (172 aa).

His71 is a catalytic residue.

Belongs to the thioester dehydratase family. FabA subfamily. Homodimer.

It localises to the cytoplasm. The catalysed reaction is a (3R)-hydroxyacyl-[ACP] = a (2E)-enoyl-[ACP] + H2O. The enzyme catalyses (3R)-hydroxydecanoyl-[ACP] = (2E)-decenoyl-[ACP] + H2O. It carries out the reaction (2E)-decenoyl-[ACP] = (3Z)-decenoyl-[ACP]. It functions in the pathway lipid metabolism; fatty acid biosynthesis. Its function is as follows. Necessary for the introduction of cis unsaturation into fatty acids. Catalyzes the dehydration of (3R)-3-hydroxydecanoyl-ACP to E-(2)-decenoyl-ACP and then its isomerization to Z-(3)-decenoyl-ACP. Can catalyze the dehydratase reaction for beta-hydroxyacyl-ACPs with saturated chain lengths up to 16:0, being most active on intermediate chain length. This Sodalis glossinidius (strain morsitans) protein is 3-hydroxydecanoyl-[acyl-carrier-protein] dehydratase.